The chain runs to 252 residues: Transmembrane ascorbate-dependent reductase CYB561 (252 aa).

Met1 is subject to N-acetylmethionine. The Cytoplasmic segment spans residues 1–17 (MESPAGRTPAPGALPYY). Residues 18–38 (VAFSQLLGLTVVAVTGAWLGA) form a helical membrane-spanning segment. Residues 20–221 (FSQLLGLTVV…FGAVVLYILT (202 aa)) enclose the Cytochrome b561 domain. At 39–52 (YRGGIAWESALQFN) the chain is on the vesicular side. Residues 53–73 (VHPLCMIIGLVFLQGDALLVY) traverse the membrane as a helical segment. Heme b-binding residues include His54, Arg74, and Lys81. The Cytoplasmic segment spans residues 74–85 (RVFRNEAKRTTK). Residues Lys81 and Lys85 each coordinate L-ascorbate. Residues 86 to 106 (ILHGLLHVLAFVIALVGLVAV) traverse the membrane as a helical segment. Heme b contacts are provided by residues His88, 117–120 (DLYS), and His122. Topologically, residues 107-125 (FDYHRKKGIADLYSLHSWC) are vesicular. The chain crosses the membrane as a helical span at residues 126–146 (GILVFVLFLAQWLVGLGFFLF). The Cytoplasmic segment spans residues 147–159 (PGASFSLRSRYRP). Arg154 contacts L-ascorbate. Residues 160 to 180 (QHVFFGAAIFLLSVGTALLGL) traverse the membrane as a helical segment. Residues His161 and Glu182 each contribute to the heme b site. Over 181–199 (KEALLFQLGTKYSAFESEG) the chain is Vesicular. The chain crosses the membrane as a helical span at residues 200-220 (VLANVLGLLLVAFGAVVLYIL). Topologically, residues 221 to 252 (TRADWKRPLQAEEQALSMDFKTLTEGDSPSSQ) are cytoplasmic. Lys226 lines the heme b pocket. Phosphoserine occurs at positions 248 and 250.

Requires heme b as cofactor.

The protein resides in the cytoplasmic vesicle. It is found in the secretory vesicle. The protein localises to the chromaffin granule membrane. The catalysed reaction is monodehydro-L-ascorbate radical(out) + L-ascorbate(in) = monodehydro-L-ascorbate radical(in) + L-ascorbate(out). In terms of biological role, transmembrane reductase that uses ascorbate as an electron donor in the cytoplasm and transfers electrons across membranes to reduce monodehydro-L-ascorbate radical in the lumen of secretory vesicles. It is therefore involved the regeneration and homeostasis within secretory vesicles of ascorbate which in turn provides reducing equivalents needed to support the activity of intravesicular enzymes. This Sus scrofa (Pig) protein is Transmembrane ascorbate-dependent reductase CYB561 (CYB561).